A 65-amino-acid polypeptide reads, in one-letter code: UPF0337 protein BCE_1081 (65 aa).

The segment at 1–28 (MSGGLKEQITGKVEKTKGQVKEGIGEVT) is disordered. Basic and acidic residues predominate over residues 12-28 (KVEKTKGQVKEGIGEVT).

Belongs to the UPF0337 (CsbD) family.

In Bacillus cereus (strain ATCC 10987 / NRS 248), this protein is UPF0337 protein BCE_1081.